The primary structure comprises 477 residues: MKITLPPFDQARVLVAGDLMLDRYWHGGTDRISPEAPVPVVHVRDIEQRPGGAGNVALNVAALGGQPELVGITGQDEAANELASLLENAGVACHFRRQPGAATITKLRVISRHQQLIRLDFEDGFPGAHARDLLPQYRPLLAGCGAVVLSDYAKGALRDPRPLIEAAREAGVPVLADPKGRDFSIYRGATLITPNLAEFEAVVGRCADEDTLVRRGEALARECGIEALLVTRGEDGMSLVRPGEAPVHLAARAREVFDVTGAGDTVIATLATGLATGLALPQAMALANLAAGIVVGKLGTATVSVAELRRALQEQEQSGRGVLTEPELLHAVADARAHGERIVMTNGCFDLLHAGHVAYLEQARSRGDRLIVAVNDDASVRRLKGEGRPINPVQQRMAVLAGLASVDWVVPFSEDTPARVIGAVLPDVLVKGGDYQPEAIAGHDAVVAHGGRVEILDFLDGCSTSAMIERMQSAPDT.

The interval 1 to 319 is ribokinase; that stretch reads MKITLPPFDQ…RALQEQEQSG (319 aa). 195-198 lines the ATP pocket; sequence NLAE. D264 is a catalytic residue. Positions 344-477 are cytidylyltransferase; it reads MTNGCFDLLH…IERMQSAPDT (134 aa).

This sequence in the N-terminal section; belongs to the carbohydrate kinase PfkB family. It in the C-terminal section; belongs to the cytidylyltransferase family. As to quaternary structure, homodimer.

The catalysed reaction is D-glycero-beta-D-manno-heptose 7-phosphate + ATP = D-glycero-beta-D-manno-heptose 1,7-bisphosphate + ADP + H(+). It catalyses the reaction D-glycero-beta-D-manno-heptose 1-phosphate + ATP + H(+) = ADP-D-glycero-beta-D-manno-heptose + diphosphate. It functions in the pathway nucleotide-sugar biosynthesis; ADP-L-glycero-beta-D-manno-heptose biosynthesis; ADP-L-glycero-beta-D-manno-heptose from D-glycero-beta-D-manno-heptose 7-phosphate: step 1/4. It participates in nucleotide-sugar biosynthesis; ADP-L-glycero-beta-D-manno-heptose biosynthesis; ADP-L-glycero-beta-D-manno-heptose from D-glycero-beta-D-manno-heptose 7-phosphate: step 3/4. Its function is as follows. Catalyzes the phosphorylation of D-glycero-D-manno-heptose 7-phosphate at the C-1 position to selectively form D-glycero-beta-D-manno-heptose-1,7-bisphosphate. Functionally, catalyzes the ADP transfer from ATP to D-glycero-beta-D-manno-heptose 1-phosphate, yielding ADP-D-glycero-beta-D-manno-heptose. The protein is Bifunctional protein HldE of Alkalilimnicola ehrlichii (strain ATCC BAA-1101 / DSM 17681 / MLHE-1).